Consider the following 1193-residue polypeptide: Structural maintenance of chromosomes protein 3 homolog (1193 aa).

Position 31–38 (31–38 (GFNGSGKS)) interacts with ATP. Lys-101 carries the N6-acetyllysine modification. Coiled coils occupy residues 179–286 (SKKV…LNKT) and 332–483 (ILRV…EIIK). The 127-residue stretch at 505-631 (ENILGFLIDN…VKSLESCENY (127 aa)) folds into the SMC hinge domain. Residues 665–993 (TVYNKLKELK…SHKNIKDMIQ (329 aa)) adopt a coiled-coil conformation.

Belongs to the SMC family. SMC3 subfamily. Component of the cohesin complex. In terms of processing, acetylation at Lys-101 by ESCO1 is important for genome stability and S phase sister chromatid cohesion.

The protein resides in the nucleus. Central component of cohesin, a complex required for chromosome cohesion during the cell cycle. The cohesin complex may form a large proteinaceous ring within which sister chromatids can be trapped. At anaphase, the complex is cleaved and dissociates from chromatin, allowing sister chromatids to segregate. Cohesion is coupled to DNA replication and is involved in DNA repair. The cohesin complex also plays an important role in spindle pole assembly during mitosis and in chromosomes movement. The sequence is that of Structural maintenance of chromosomes protein 3 homolog from Plasmodium falciparum (isolate 3D7).